Reading from the N-terminus, the 1026-residue chain is mRNA transport homolog 4 (1026 aa).

The Helicase ATP-binding domain occupies 134 to 290 (ILCIDNNQSV…WVASIKQQPV (157 aa)). 147–154 (AHTSAGKT) is an ATP binding site. The short motif at 238 to 241 (DEIH) is the DEIH box element. Residues 360-564 (NVLKIIRSVA…NMVLNLMRVE (205 aa)) form the Helicase C-terminal domain.

Belongs to the helicase family. SKI2 subfamily.

Its subcellular location is the nucleus. The chain is mRNA transport homolog 4 (mtr-4) from Caenorhabditis elegans.